Reading from the N-terminus, the 102-residue chain is Small ribosomal subunit protein uS10 (102 aa).

Belongs to the universal ribosomal protein uS10 family. As to quaternary structure, part of the 30S ribosomal subunit.

Involved in the binding of tRNA to the ribosomes. This chain is Small ribosomal subunit protein uS10, found in Treponema pallidum (strain Nichols).